A 451-amino-acid polypeptide reads, in one-letter code: Threonylcarbamoyladenosine tRNA methylthiotransferase MtaB (451 aa).

Residues 2-114 (ATVAFHTLGC…MLGYIDQYRE (113 aa)) enclose the MTTase N-terminal domain. Residues Cys11, Cys47, Cys78, Cys153, Cys157, and Cys160 each contribute to the [4Fe-4S] cluster site. One can recognise a Radical SAM core domain in the interval 139-369 (FTDRTRASLK…IALSDQLAKE (231 aa)). The 66-residue stretch at 372–437 (SQYENEVLEI…YPYNEGQFVR (66 aa)) folds into the TRAM domain.

The protein belongs to the methylthiotransferase family. MtaB subfamily. [4Fe-4S] cluster is required as a cofactor.

The protein localises to the cytoplasm. It catalyses the reaction N(6)-L-threonylcarbamoyladenosine(37) in tRNA + (sulfur carrier)-SH + AH2 + 2 S-adenosyl-L-methionine = 2-methylsulfanyl-N(6)-L-threonylcarbamoyladenosine(37) in tRNA + (sulfur carrier)-H + 5'-deoxyadenosine + L-methionine + A + S-adenosyl-L-homocysteine + 2 H(+). Catalyzes the methylthiolation of N6-threonylcarbamoyladenosine (t(6)A), leading to the formation of 2-methylthio-N6-threonylcarbamoyladenosine (ms(2)t(6)A) at position 37 in tRNAs that read codons beginning with adenine. In Bacillus subtilis (strain 168), this protein is Threonylcarbamoyladenosine tRNA methylthiotransferase MtaB (mtaB).